A 368-amino-acid chain; its full sequence is MRSVELLSLAALGSLVAAAPAPSRVSDLTKRSSTCTFTAASQATESASGCSEIVLDNIEVPAGETLDLSDVDDGTTIVFEGTTTFGYKEWSGPLIRFGGKDITVKQNSGAVIDGEGSRWWDGEGTNGGKTKPKFMYAHSLEDSTITGLSIKNTPVQAISVQATNLYLIDITIDNSDGDDNGGHNTDGFDISESTGVYIRGATVKNQDDCIAINSGENIEFSGGTCSGGHGLSIGSVGGRDDNTVKNVTITDSTVTDSANGVRIKTVYDATGSVSEVTYSNIKLSGITDYGIVIEQDYENGSPTGTPTTGVPITDLTIDGVTGTVESDAVEVYILCGDGSCSDWTWEGVDITGGETSSKCENVPSGASC.

The N-terminal stretch at 1 to 18 (MRSVELLSLAALGSLVAA) is a signal peptide. Positions 19 to 31 (APAPSRVSDLTKR) are excised as a propeptide. The cysteines at positions 35 and 50 are disulfide-linked. PbH1 repeat units follow at residues 140–162 (LEDS…SVQA), 167–192 (LIDI…DISE), 193–214 (STGV…AINS), 215–235 (GENI…SIGS), 244–265 (VKNV…RIKT), 273–295 (VSEV…VIEQ), and 307–352 (TTGV…DITG). The Proton donor role is filled by D207. C209 and C225 are oxidised to a cystine. The active site involves H229. N246 carries an N-linked (GlcNAc...) asparagine glycan. 2 cysteine pairs are disulfide-bonded: C335–C340 and C359–C368.

Belongs to the glycosyl hydrolase 28 family.

The protein localises to the secreted. The enzyme catalyses (1,4-alpha-D-galacturonosyl)n+m + H2O = (1,4-alpha-D-galacturonosyl)n + (1,4-alpha-D-galacturonosyl)m.. In terms of biological role, involved in maceration and soft-rotting of plant tissue. Hydrolyzes the 1,4-alpha glycosidic bonds of de-esterified pectate in the smooth region of the plant cell wall. The protein is Probable endopolygalacturonase A (pgaA) of Neosartorya fischeri (strain ATCC 1020 / DSM 3700 / CBS 544.65 / FGSC A1164 / JCM 1740 / NRRL 181 / WB 181) (Aspergillus fischerianus).